We begin with the raw amino-acid sequence, 592 residues long: Aspartate--tRNA ligase (592 aa).

Residue E176 coordinates L-aspartate. Residues 200-203 (QIFK) form an aspartate region. R222 lines the L-aspartate pocket. Residues 222 to 224 (RDE) and Q231 contribute to the ATP site. An L-aspartate-binding site is contributed by H450. E484 is a binding site for ATP. R491 lines the L-aspartate pocket. ATP is bound at residue 536–539 (GLDR).

This sequence belongs to the class-II aminoacyl-tRNA synthetase family. Type 1 subfamily. As to quaternary structure, homodimer.

It is found in the cytoplasm. The enzyme catalyses tRNA(Asp) + L-aspartate + ATP = L-aspartyl-tRNA(Asp) + AMP + diphosphate. Catalyzes the attachment of L-aspartate to tRNA(Asp) in a two-step reaction: L-aspartate is first activated by ATP to form Asp-AMP and then transferred to the acceptor end of tRNA(Asp). The sequence is that of Aspartate--tRNA ligase from Macrococcus caseolyticus (strain JCSC5402) (Macrococcoides caseolyticum).